Consider the following 331-residue polypeptide: Ribosomal RNA small subunit methyltransferase C (331 aa).

Belongs to the methyltransferase superfamily. RsmC family. In terms of assembly, monomer.

The protein resides in the cytoplasm. It carries out the reaction guanosine(1207) in 16S rRNA + S-adenosyl-L-methionine = N(2)-methylguanosine(1207) in 16S rRNA + S-adenosyl-L-homocysteine + H(+). In terms of biological role, specifically methylates the guanine in position 1207 of 16S rRNA in the 30S particle. This chain is Ribosomal RNA small subunit methyltransferase C, found in Pseudomonas putida (strain W619).